Consider the following 335-residue polypeptide: Ubiquinone biosynthesis protein COQ4, mitochondrial (335 aa).

Residues 1–10 (MLRLSLLRST) constitute a mitochondrion transit peptide. H210, D211, H214, and E226 together coordinate Zn(2+).

This sequence belongs to the COQ4 family. In terms of assembly, component of a multi-subunit COQ enzyme complex, composed of at least COQ3, COQ4, COQ5, COQ6, COQ7 and COQ9. Interacts with COQ3. Zn(2+) is required as a cofactor.

The protein resides in the mitochondrion inner membrane. The catalysed reaction is 4-hydroxy-3-methoxy-5-(all-trans-hexaprenyl)benzoate + H(+) = 2-methoxy-6-(all-trans-hexaprenyl)phenol + CO2. Its pathway is cofactor biosynthesis; ubiquinone biosynthesis. Lyase that catalyzes the C1-decarboxylation of 4-hydroxy-3-methoxy-5-(all-trans-hexaprenyl)benzoic acid into 2-methoxy-6-(all-trans-hexaprenyl)phenol during ubiquinone biosynthesis. The polypeptide is Ubiquinone biosynthesis protein COQ4, mitochondrial (Saccharomyces cerevisiae (strain RM11-1a) (Baker's yeast)).